The primary structure comprises 710 residues: Lactoperoxidase (710 aa).

The signal sequence occupies residues 1–22; that stretch reads MKVLLRLPALLASLTLLQMAAS. The propeptide occupies 23-98; the sequence is TRNATRTATI…WEQSLKRLRR (76 aa). Residues Asn25, Asn104, and Asn131 are each glycosylated (N-linked (GlcNAc...) asparagine). Cysteines 130 and 143 form a disulfide. Residue Asp223 coordinates heme b. The Proton acceptor role is filled by His224. Asp225 is a binding site for Ca(2+). Residue Asn238 is glycosylated (N-linked (GlcNAc...) asparagine). Intrachain disulfides connect Cys244–Cys254 and Cys248–Cys272. Thr299, Phe301, Asp303, and Ser305 together coordinate Ca(2+). Ser313 is modified (phosphoserine). N-linked (GlcNAc...) asparagine glycosylation is present at Asn320. Cys352 and Cys363 are joined by a disulfide. Heme b contacts are provided by Glu373 and His466. Tyr480 bears the 3'-nitrotyrosine mark. Disulfide bonds link Cys571/Cys628 and Cys669/Cys694.

The protein belongs to the peroxidase family. XPO subfamily. Ca(2+) is required as a cofactor. Requires heme b as cofactor. As to expression, expressed in the lacrimal gland with higher levels and 3-fold higher activity in adult females than males and secreted into tears (at protein level).

The protein resides in the secreted. It is found in the cytoplasm. The catalysed reaction is 2 a phenolic donor + H2O2 = 2 a phenolic radical donor + 2 H2O. The enzyme catalyses thiocyanate + H2O2 + H(+) = hypothiocyanous acid + H2O. It catalyses the reaction iodide + H2O2 = hypoiodite + H2O. Heme-containing oxidoreductase which catalyzes the conversion of thiocyanate (SCN(-)) into antimicrobial agent hypothiocyanous acid (OSCN(-)) in the presence of hydrogen peroxide (H2O2). Also involved in the conversion of iodide (I(-)) into hypoiodite (IO(-)) in the presence of H2O2. Responsible for the inactivation of a wide range of micro-organisms and hence, important component of defense mechanism. May be implicated in airway host defense against infection. May contribute to maintaining an appropriate H2O2 cellular level, therefore protecting cells from H2O2-caused injuries and inflammation. This chain is Lactoperoxidase (LPO), found in Mesocricetus auratus (Golden hamster).